Reading from the N-terminus, the 286-residue chain is MKQHQSADNSQGQLYIVPTPIGNLADITQRALEVLQAVDLIAAEDTRHTGLLLQHFGINARLFALHDHNEQQKAETLLAKLQEGQNIALVSDAGTPLINDPGYHLVRTCREAGIRVVPLPGPCAAITALSAAGLPSDRFCYEGFLPAKSKGRRDALKAIEAEPRTLIFYESTHRLLDSLEDIVAVLGESRYVVLARELTKTWETIHGAPVGELLAWVKEDENRRKGEMVLIVEGHKAQEEDLPADALRTLALLQAELPLKKAAALAAEIHGVKKNALYKYALEQQG.

Belongs to the methyltransferase superfamily. RsmI family.

It is found in the cytoplasm. The catalysed reaction is cytidine(1402) in 16S rRNA + S-adenosyl-L-methionine = 2'-O-methylcytidine(1402) in 16S rRNA + S-adenosyl-L-homocysteine + H(+). Its function is as follows. Catalyzes the 2'-O-methylation of the ribose of cytidine 1402 (C1402) in 16S rRNA. The polypeptide is Ribosomal RNA small subunit methyltransferase I (Escherichia coli O157:H7).